The following is a 290-amino-acid chain: Small ribosomal subunit biogenesis GTPase RsgA (290 aa).

The 152-residue stretch at 62–213 (KNSLVRPPIV…IADTPGFSSL (152 aa)) folds into the CP-type G domain. Residues 111 to 114 (SKMD) and 156 to 164 (GQTGVGKST) each bind GTP. Zn(2+) contacts are provided by Cys237, Cys242, His244, and Cys250.

Belongs to the TRAFAC class YlqF/YawG GTPase family. RsgA subfamily. As to quaternary structure, monomer. Associates with 30S ribosomal subunit, binds 16S rRNA. Zn(2+) serves as cofactor.

It is found in the cytoplasm. One of several proteins that assist in the late maturation steps of the functional core of the 30S ribosomal subunit. Helps release RbfA from mature subunits. May play a role in the assembly of ribosomal proteins into the subunit. Circularly permuted GTPase that catalyzes slow GTP hydrolysis, GTPase activity is stimulated by the 30S ribosomal subunit. The polypeptide is Small ribosomal subunit biogenesis GTPase RsgA (Streptococcus pyogenes serotype M3 (strain ATCC BAA-595 / MGAS315)).